Here is a 68-residue protein sequence, read N- to C-terminus: Frenatin-3 (68 aa).

The signal sequence occupies residues 1–22 (MHFLKKSIFLVLFLGLVSLSIC). The propeptide occupies 23–46 (EKEKREDQNEEEVDENEEESEEKR). The tract at residues 26-47 (KREDQNEEEVDENEEESEEKRG) is disordered. The segment covering 30–42 (QNEEEVDENEEES) has biased composition (acidic residues).

The protein belongs to the frog skin active peptide (FSAP) family. Frenatin subfamily. Expressed by the granular skin glands.

Its subcellular location is the secreted. Antimicrobial peptide with activity against both Gram-positive and Gram-negative bacteria. Antibacterial activities have been tested against Bacillus cereus (MIC=12.5 ug/ml), Escherichia coli (MIC=50 ug/ml), Leuconostoc mesenteroides (MIC=25 ug/ml), Micrococcus luteus (MIC=1.5 ug/ml), Pastewella haemolytica (MIC=0.8 ug/ml), Staphylococcus aureus (MIC&lt;l00 ug/ml), Streptococcus faecalis (MIC&lt;150 ug/ml) and Streptococcus uberis (MIC=50 ug/ml). Strongly inhibits the formation of NO by neuronal nitric oxide synthase (nNOS) at micromolar concentrations. Acts by a non-competitive mechanism, probably by binding to calcium/calmodulin and as a consequence blocking calmodulin attachment to nNOS. The chain is Frenatin-3 from Nyctimystes infrafrenatus (White-lipped tree frog).